Here is a 256-residue protein sequence, read N- to C-terminus: MLEFYGKRFESRLLLGTAQYPSPSILADAVRASLSRIVTVSLRRESGEARAGQDFWALIKALGVAVLPNTAGCHTPREAITTAHMAREVFGTNWIKLEVIGDTDTLQPDPFGLVEAARILCDESFEVFPYMNDDLIVAERLIEAGCKVLMPWGAPIGSGRGLNNPYALKTMRAHFPDIPLVVDAGIGVPSHAAAAMELGFDAVLINTAVAKAGDPAAMARAFALAVEAGRLAYEADPIEARDMASPSTPLLGKAFL.

Lys96 serves as the catalytic Schiff-base intermediate with DXP. 1-deoxy-D-xylulose 5-phosphate contacts are provided by residues Gly157, 184–185 (AG), and 206–207 (NT).

It belongs to the ThiG family. Homotetramer. Forms heterodimers with either ThiH or ThiS.

It localises to the cytoplasm. The enzyme catalyses [ThiS sulfur-carrier protein]-C-terminal-Gly-aminoethanethioate + 2-iminoacetate + 1-deoxy-D-xylulose 5-phosphate = [ThiS sulfur-carrier protein]-C-terminal Gly-Gly + 2-[(2R,5Z)-2-carboxy-4-methylthiazol-5(2H)-ylidene]ethyl phosphate + 2 H2O + H(+). The protein operates within cofactor biosynthesis; thiamine diphosphate biosynthesis. In terms of biological role, catalyzes the rearrangement of 1-deoxy-D-xylulose 5-phosphate (DXP) to produce the thiazole phosphate moiety of thiamine. Sulfur is provided by the thiocarboxylate moiety of the carrier protein ThiS. In vitro, sulfur can be provided by H(2)S. The polypeptide is Thiazole synthase (Brucella canis (strain ATCC 23365 / NCTC 10854 / RM-666)).